Consider the following 433-residue polypeptide: Acetyl-CoA-benzylalcohol acetyltransferase (433 aa).

Catalysis depends on proton acceptor residues His-152 and Asp-377.

The protein belongs to the plant acyltransferase family.

It catalyses the reaction benzyl alcohol + acetyl-CoA = benzyl acetate + CoA. It carries out the reaction (E)-cinnamyl alcohol + acetyl-CoA = (E)-cinnamyl acetate + CoA. Functionally, involved in the biosynthesis of benzyl acetate, a major constituent of the floral scent. Can use benzylalcohol, cinnamylalcohol, 3-cis-hexene-1-ol or heptanol as substrates. Has some activity with 2-phenylethanol and 2-naphtalene-ethanol. In Clarkia breweri (Fairy fans), this protein is Acetyl-CoA-benzylalcohol acetyltransferase (BEAT).